The primary structure comprises 387 residues: LL-diaminopimelate aminotransferase (387 aa).

Residues tyrosine 14 and glycine 39 each coordinate substrate. Residues tyrosine 68, 102–103 (SK), tyrosine 127, asparagine 177, tyrosine 208, and 236–238 (SLS) each bind pyridoxal 5'-phosphate. Residues lysine 103, tyrosine 127, and asparagine 177 each contribute to the substrate site. Lysine 239 is subject to N6-(pyridoxal phosphate)lysine. Pyridoxal 5'-phosphate is bound at residue arginine 247. Arginine 365 contacts substrate.

This sequence belongs to the class-I pyridoxal-phosphate-dependent aminotransferase family. LL-diaminopimelate aminotransferase subfamily. In terms of assembly, homodimer. The cofactor is pyridoxal 5'-phosphate.

The catalysed reaction is (2S,6S)-2,6-diaminopimelate + 2-oxoglutarate = (S)-2,3,4,5-tetrahydrodipicolinate + L-glutamate + H2O + H(+). It participates in amino-acid biosynthesis; L-lysine biosynthesis via DAP pathway; LL-2,6-diaminopimelate from (S)-tetrahydrodipicolinate (aminotransferase route): step 1/1. Involved in the synthesis of meso-diaminopimelate (m-DAP or DL-DAP), required for both lysine and peptidoglycan biosynthesis. Catalyzes the direct conversion of tetrahydrodipicolinate to LL-diaminopimelate. The chain is LL-diaminopimelate aminotransferase from Aquifex aeolicus (strain VF5).